Reading from the N-terminus, the 496-residue chain is Pituitary adenylate cyclase-activating polypeptide type I receptor (496 aa).

Positions 1–20 (MARTLQLSLTALLLLPMAIA) are cleaved as a signal peptide. The Extracellular portion of the chain corresponds to 21–152 (MHSDCIFKKE…SGDQDYYYLS (132 aa)). 3 disulfides stabilise this stretch: C34/C63, C54/C118, and C77/C134. N-linked (GlcNAc...) asparagine glycans are attached at residues N48, N60, and N117. The important for ADCYAP1/PACAP ligand binding and specificity stretch occupies residues 125 to 139 (EPFPHYFDACGFDDY). An important for ligand binding and specificity region spans residues 125-139 (EPFPHYFDACGFDDY). Residues 153–177 (VKALYTVGYSTSLVTLTTAMVILCR) traverse the membrane as a helical segment. Residues 178–187 (FRKLHCTRNF) lie on the Cytoplasmic side of the membrane. A helical membrane pass occupies residues 188–208 (IHMNLFVSFMLRAISVFIKDW). Residues 209-223 (ILYAEQDSSHCFVST) are Extracellular-facing. A helical transmembrane segment spans residues 224–249 (VECKAVMVFFHYCVVSNYFWLFIEGL). C226 and C296 form a disulfide bridge. The Cytoplasmic portion of the chain corresponds to 250–267 (YLFTLLVETFFPERRYFY). A helical transmembrane segment spans residues 268 to 290 (WYTIIGWGTPTVCVTVWAVLRLY). Residues 291 to 302 (FDDAGCWDMNDS) are Extracellular-facing. Residues 303–329 (TALWWVIKGPVVGSIMVNFVLFIGIII) traverse the membrane as a helical segment. Residues 330–347 (ILVQKLQSPDMGGNESSI) are Cytoplasmic-facing. A helical membrane pass occupies residues 348 to 402 (YFSCVQKCYCKPQRAQQHSCKMSELSTITLRLARSTLLLIPLFGIHYTVFAFSPE). The Extracellular portion of the chain corresponds to 403 to 407 (NVSKR). Residues 408-431 (ERLVFELGLGSFQGFVVAVLYCFL) traverse the membrane as a helical segment. Over 432 to 496 (NGEVQAEIKR…SSLPADNLAT (65 aa)) the chain is Cytoplasmic. Phosphoserine occurs at positions 462 and 475.

It belongs to the G-protein coupled receptor 2 family. In terms of assembly, interacts with maxadilan, a vasodilator peptide from Lutzomyia longipalpis saliva; the interaction results in ADCYAP1R1 activation.

It is found in the cell membrane. In terms of biological role, g protein-coupled receptor activated by the neuropeptide pituitary adenylate cyclase-activating polypeptide (ADCYAP1/PACAP). Binds both PACAP27 and PACAP38 bioactive peptides. Ligand binding causes a conformation change that triggers signaling via guanine nucleotide-binding proteins (G proteins) and modulates the activity of downstream effectors. Activates cAMP-dependent pathway. May regulate the release of adrenocorticotropin, luteinizing hormone, growth hormone, prolactin, epinephrine, and catecholamine. May play a role in spermatogenesis and sperm motility. Causes smooth muscle relaxation and secretion in the gastrointestinal tract. This Mus musculus (Mouse) protein is Pituitary adenylate cyclase-activating polypeptide type I receptor.